The primary structure comprises 788 residues: IQ motif and ubiquitin-like domain-containing protein (788 aa).

The interval 1–89 (MSDPEEERVA…SLGSASGSQD (89 aa)) is disordered. Positions 7–20 (ERVADSTAHYEEAG) are enriched in basic and acidic residues. Acidic residues predominate over residues 31–54 (EAEGSDVMPEQDDEVQELTTESEE). Basic and acidic residues predominate over residues 68 to 78 (KSDDSKPREEV). Positions 80–89 (SLGSASGSQD) are enriched in polar residues. The region spanning 127–203 (ATVKIVLIPA…VQVEVFSTLP (77 aa)) is the Ubiquitin-like domain. The IQ domain maps to 334 to 363 (RLHAVIVIQTSYRRWHAKRYVESLRKQKKL).

Component of the axonemal radial spoke 1 (RS1) complex, at least composed of spoke head proteins RSPH1, RSPH3B, RSPH9 and the cilia-specific component RSPH4A or sperm-specific component RSPH6A, spoke stalk proteins RSPH14, DNAJB13, DYDC1, ROPN1L and NME5, and the anchor protein IQUB. Does not appear to be part of radial spoke complexes 2 or 3 (RS2 or RS3). Interacts with CALM1. Interacts with DNAJB13. Interacts with DYNLL2. Interacts with NME5. Interacts with RSPH3. Interacts with RSPH9. Interacts with ZMYND10. Interacts with calmodulin; the interaction occurs in conditions of low but not high calcium. As to expression, expressed in the flagellum of sperm cells and cilia of tracheal epithelial cells (at protein level). High expression in testis, also present in brain and lung.

It localises to the cytoplasm. It is found in the cytoskeleton. Its subcellular location is the flagellum axoneme. The protein localises to the cell projection. The protein resides in the cilium. In terms of biological role, anchors the radial spoke 1 (RS1) complex to the A microtubule of outer doublet microtubules in axonemes. The triple radial spokes (RS1, RS2 and RS3) are required to modulate beating of the sperm flagellum. May play a role in inhibiting signaling via MAPK1/ERK2 and MAPK3/ERK1. Additionally, may play a role in the functioning of cilia. Not required for the functioning of tracheal or ependymal cilia. The sequence is that of IQ motif and ubiquitin-like domain-containing protein (Iqub) from Mus musculus (Mouse).